A 258-amino-acid chain; its full sequence is Phosphoribosylaminoimidazole-succinocarboxamide synthase (258 aa).

It belongs to the SAICAR synthetase family.

It carries out the reaction 5-amino-1-(5-phospho-D-ribosyl)imidazole-4-carboxylate + L-aspartate + ATP = (2S)-2-[5-amino-1-(5-phospho-beta-D-ribosyl)imidazole-4-carboxamido]succinate + ADP + phosphate + 2 H(+). It functions in the pathway purine metabolism; IMP biosynthesis via de novo pathway; 5-amino-1-(5-phospho-D-ribosyl)imidazole-4-carboxamide from 5-amino-1-(5-phospho-D-ribosyl)imidazole-4-carboxylate: step 1/2. The sequence is that of Phosphoribosylaminoimidazole-succinocarboxamide synthase from Maricaulis maris (strain MCS10) (Caulobacter maris).